Consider the following 388-residue polypeptide: Chorismate synthase (388 aa).

Residues Arg-39 and Arg-45 each coordinate NADP(+). Residues 130-132 (RSS), 251-252 (NA), Gly-296, 311-315 (KPIPT), and Arg-337 each bind FMN.

The protein belongs to the chorismate synthase family. As to quaternary structure, homotetramer. Requires FMNH2 as cofactor.

It carries out the reaction 5-O-(1-carboxyvinyl)-3-phosphoshikimate = chorismate + phosphate. It functions in the pathway metabolic intermediate biosynthesis; chorismate biosynthesis; chorismate from D-erythrose 4-phosphate and phosphoenolpyruvate: step 7/7. Catalyzes the anti-1,4-elimination of the C-3 phosphate and the C-6 proR hydrogen from 5-enolpyruvylshikimate-3-phosphate (EPSP) to yield chorismate, which is the branch point compound that serves as the starting substrate for the three terminal pathways of aromatic amino acid biosynthesis. This reaction introduces a second double bond into the aromatic ring system. The polypeptide is Chorismate synthase (Streptococcus pyogenes serotype M5 (strain Manfredo)).